A 314-amino-acid chain; its full sequence is Olfactory receptor 5D13 (314 aa).

Over 1 to 27 (MMASERNQSSTPTFILLGFSEYPEIQV) the chain is Extracellular. The N-linked (GlcNAc...) asparagine glycan is linked to asparagine 7. A helical membrane pass occupies residues 28–48 (PLFLVFLFVYTVTVVGNLGMI). Residues 49–56 (IIIRLNSK) lie on the Cytoplasmic side of the membrane. Residues 57-77 (LHTIMCFFLSHLSLTDFCFST) form a helical membrane-spanning segment. The Extracellular segment spans residues 78 to 101 (VVTPKLLENLVVEYRTISFSGCIM). The helical transmembrane segment at 102–122 (QFCFACIFGVTETFMLAAMAY) threads the bilayer. Over 123–141 (DRFVAVCKPLLYTTIMSQK) the chain is Cytoplasmic. Residues 142–162 (LCALLVAGSYTWGIVCSLILT) traverse the membrane as a helical segment. At 163–198 (YFLLDLSFCESTFINNFICDHSVIVSASYSDPYISQ) the chain is on the extracellular side. Residues 199–219 (RLCFIIAIFNEVSSLIIILTS) traverse the membrane as a helical segment. The Cytoplasmic segment spans residues 220 to 239 (YMLIFTTIMKMRSASGRQKT). The helical transmembrane segment at 240–260 (FSTCASHLTAITIFHGTILFL) threads the bilayer. Topologically, residues 261–273 (YCVPNPKTSSLIV) are extracellular. Residues 274 to 294 (TVASVFYTVAIPMLNPLIYSL) traverse the membrane as a helical segment. The Cytoplasmic segment spans residues 295-314 (RNKDINNMFEKLVVTKLIYH).

It belongs to the G-protein coupled receptor 1 family.

Its subcellular location is the cell membrane. Functionally, odorant receptor. The chain is Olfactory receptor 5D13 (OR5D13) from Homo sapiens (Human).